Reading from the N-terminus, the 553-residue chain is Methionine--tRNA ligase (553 aa).

The short motif at 12–22 (PYANSQLHLGH) is the 'HIGH' region element. Zn(2+) is bound by residues cysteine 144, cysteine 147, cysteine 157, and cysteine 160. The 'KMSKS' region motif lies at 332-336 (KFSKS). Lysine 335 lines the ATP pocket.

The protein belongs to the class-I aminoacyl-tRNA synthetase family. MetG type 1 subfamily. Monomer. Requires Zn(2+) as cofactor.

It localises to the cytoplasm. It carries out the reaction tRNA(Met) + L-methionine + ATP = L-methionyl-tRNA(Met) + AMP + diphosphate. Its function is as follows. Is required not only for elongation of protein synthesis but also for the initiation of all mRNA translation through initiator tRNA(fMet) aminoacylation. The polypeptide is Methionine--tRNA ligase (Dehalococcoides mccartyi (strain ATCC BAA-2100 / JCM 16839 / KCTC 5957 / BAV1)).